A 443-amino-acid polypeptide reads, in one-letter code: Sensor histidine protein kinase HK06 (443 aa).

2 helical membrane-spanning segments follow: residues 16–36 (FAIL…TFPF) and 140–160 (ILLL…FVFS). An HAMP domain is found at 165–217 (KRLLNPLFYISEVTSKMQDLDDNIRFDESRKDEVGEVGKQINGMYEHLLKVIH). Residues 239–443 (GASHELKTPL…EHGMEFKISL (205 aa)) enclose the Histidine kinase domain. His242 bears the Phosphohistidine; by autocatalysis mark.

Its subcellular location is the cell membrane. The catalysed reaction is ATP + protein L-histidine = ADP + protein N-phospho-L-histidine.. Functionally, member of the two-component regulatory system HK06/RR06 involved in regulation of target genes, including choline-binding protein CbpA. Has been shown in one study to not be required for regulation of expression of choline-binding protein CbpA. The chain is Sensor histidine protein kinase HK06 from Streptococcus pneumoniae serotype 2 (strain D39 / NCTC 7466).